Consider the following 124-residue polypeptide: Seripauperin-19 (124 aa).

The N-terminal stretch at 1–20 (MVKLTSIAAGVAAIAAGVAA) is a signal peptide.

The protein belongs to the SRP1/TIP1 family. Seripauperin subfamily.

This is Seripauperin-19 (PAU19) from Saccharomyces cerevisiae (strain ATCC 204508 / S288c) (Baker's yeast).